The following is a 210-amino-acid chain: Beta-crystallin A4 (210 aa).

Positions Met-1–His-25 are N-terminal arm. Beta/gamma crystallin 'Greek key' domains lie at Trp-26–Ser-65 and Gly-66–Ala-112. Residues Cys-113–Asp-118 form a connecting peptide region. 2 consecutive Beta/gamma crystallin 'Greek key' domains span residues Ser-119–Ser-160 and Gly-161–Gln-209.

This sequence belongs to the beta/gamma-crystallin family. As to quaternary structure, homo/heterodimer, or complexes of higher-order. The structure of beta-crystallin oligomers seems to be stabilized through interactions between the N-terminal arms.

Crystallins are the dominant structural components of the vertebrate eye lens. The chain is Beta-crystallin A4 (CRYBA4) from Bos taurus (Bovine).